The primary structure comprises 454 residues: Glutamyl-tRNA reductase (454 aa).

Residues 49–52, serine 109, 114–116, and glutamine 120 each bind substrate; these read TCNR and ETQ. The active-site Nucleophile is the cysteine 50. 189–194 contacts NADP(+); sequence GAGKMS. The disordered stretch occupies residues 434 to 454; that stretch reads NDKNKQTSSSREQVLVSRFPD.

It belongs to the glutamyl-tRNA reductase family. Homodimer.

The catalysed reaction is (S)-4-amino-5-oxopentanoate + tRNA(Glu) + NADP(+) = L-glutamyl-tRNA(Glu) + NADPH + H(+). It participates in porphyrin-containing compound metabolism; protoporphyrin-IX biosynthesis; 5-aminolevulinate from L-glutamyl-tRNA(Glu): step 1/2. Catalyzes the NADPH-dependent reduction of glutamyl-tRNA(Glu) to glutamate 1-semialdehyde (GSA). This Brevibacillus brevis (strain 47 / JCM 6285 / NBRC 100599) protein is Glutamyl-tRNA reductase.